Consider the following 834-residue polypeptide: Copper-exporting P-type ATPase (834 aa).

At 2 to 186 (SQTIDLTLDG…TAVATMKRFR (185 aa)) the chain is on the cytoplasmic side. HMA domains follow at residues 3 to 64 (QTID…YDAS) and 99 to 162 (DSQQ…YGAE). Cys-14, Cys-17, Cys-110, and Cys-113 together coordinate Cu(+). Short sequence motifs (CXXC motif) lie at residues 14 to 17 (CGHC) and 110 to 113 (CASC). A helical membrane pass occupies residues 187–207 (WQAIVALAVGIPVMVWGMIGD). Topologically, residues 208–217 (NMMVTADNRS) are periplasmic; loop 1. The helical transmembrane segment at 218–238 (LWLVIGLITLAVMVFAGGHFY) threads the bilayer. Over 239-253 (RSAWKSLLNGAATMD) the chain is Cytoplasmic. Residues 254-274 (TLVALGTGVAWLYSMSVNLWP) traverse the membrane as a helical segment. At 275–283 (QWFPMEARH) the chain is on the periplasmic; loop 2 side. The helical transmembrane segment at 284 to 304 (LYYEASAMIIGLINLGHMLEA) threads the bilayer. The Cytoplasmic portion of the chain corresponds to 305-437 (RARQRSSKAL…EIGQLADKIS (133 aa)). Residues 438 to 458 (AVFVPVVVVIALVSAAIWYFF) traverse the membrane as a helical segment. At 459 to 463 (GPAPQ) the chain is on the periplasmic; loop 3 side. The helical transmembrane segment at 464-484 (IVYTLVIATTVLIIACPCALG) threads the bilayer. At 485 to 778 (LATPMSIISG…ATLHNMKQNL (294 aa)) the chain is on the cytoplasmic side. Asp-523 (4-aspartylphosphate intermediate) is an active-site residue. Mg(2+)-binding residues include Asp-720 and Asp-724. A helical membrane pass occupies residues 779-799 (LGAFIYNSIGIPVAAGILWPF). Thr-800 is a topological domain (periplasmic; loop 4). A helical membrane pass occupies residues 801 to 821 (GTLLNPVVAGAAMALSSITVV). At 822–834 (SNANRLLRFKPKE) the chain is on the cytoplasmic side.

The protein belongs to the cation transport ATPase (P-type) (TC 3.A.3) family. Type IB subfamily. As to quaternary structure, copper-exporting P-type ATPase interacts with apo-periplasmic copper chaperone CusF; when CusF is precharged with copper it binds very little CopA. The periplasmic loops of CopA, especially the first half of loop 1, play a large role in binding to CusF.

It localises to the cell inner membrane. The protein resides in the cytoplasm. It carries out the reaction Cu(+)(in) + ATP + H2O = Cu(+)(out) + ADP + phosphate + H(+). Export is inhibited by vanadate. Phosphorylation is inhibited by vanadate and sensitive to KOH and hydroxylamine; it is not inhibited by azide. Phosphorylation is Cu(+) not Cu(2+)-dependent. ATPase activity is inhibited by bathocuproindisulfonate (BCDS), which chelates Cu(+) but not Cu(2+), and stimulated 3-4-fold by Cu(+). ATPase activity is inhibited by Cu(2+) plus DTT or Ag(+). Functionally, exports Cu(+) from the cytoplasm to the periplasm. Binds 2 Cu(+) ions per monomer, which are transferred to periplasmic copper chaperone CusF upon ATP hydrolysis. In vitro an excess of CusF over CopA is required for efficient transfer. May also be involved in silver export. In terms of biological role, mRNA is subject to programmed ribosomal frameshifting which produces a cytoplasmic copper chaperone CopA(Z) that corresponds to the first HMA domain. The soluble form is essential for cell survivial in the presence of CuSO(4); in growth competition experiments between wild-type and a version that prevents expression of CopA(Z) after 50 generations the non-CopA(Z) version is nearly extinct. The first HMA domain (residues 1-70) can be replaced by B.subtilis Cu chaperone CopZ. The polypeptide is Copper-exporting P-type ATPase (Escherichia coli (strain K12)).